The chain runs to 225 residues: Uracil-DNA glycosylase (225 aa).

Residue D65 is the Proton acceptor of the active site.

This sequence belongs to the uracil-DNA glycosylase (UDG) superfamily. UNG family.

Its subcellular location is the cytoplasm. The enzyme catalyses Hydrolyzes single-stranded DNA or mismatched double-stranded DNA and polynucleotides, releasing free uracil.. Functionally, excises uracil residues from the DNA which can arise as a result of misincorporation of dUMP residues by DNA polymerase or due to deamination of cytosine. The chain is Uracil-DNA glycosylase from Bacillus cereus (strain AH820).